The sequence spans 550 residues: tRNA modification GTPase MnmE (550 aa).

(6S)-5-formyl-5,6,7,8-tetrahydrofolate contacts are provided by R20, E78, and R116. Residues 212 to 478 form the TrmE-type G domain; it reads GFSVVIVGKP…LLDKIFDIIS (267 aa). N222 lines the K(+) pocket. Residues 222–227, 241–247, and 266–269 contribute to the GTP site; these read NVGKST, TDIPGTT, and DTAG. S226 lines the Mg(2+) pocket. Residues T241, I243, and T246 each coordinate K(+). Residue T247 coordinates Mg(2+). A (6S)-5-formyl-5,6,7,8-tetrahydrofolate-binding site is contributed by K550.

This sequence belongs to the TRAFAC class TrmE-Era-EngA-EngB-Septin-like GTPase superfamily. TrmE GTPase family. As to quaternary structure, homodimer. Heterotetramer of two MnmE and two MnmG subunits. Requires K(+) as cofactor.

The protein resides in the cytoplasm. Exhibits a very high intrinsic GTPase hydrolysis rate. Involved in the addition of a carboxymethylaminomethyl (cmnm) group at the wobble position (U34) of certain tRNAs, forming tRNA-cmnm(5)s(2)U34. The chain is tRNA modification GTPase MnmE from Neorickettsia sennetsu (strain ATCC VR-367 / Miyayama) (Ehrlichia sennetsu).